A 480-amino-acid polypeptide reads, in one-letter code: Phenylalanine--tRNA ligase alpha subunit (480 aa).

L-phenylalanine is bound by residues Thr-324 and Phe-407. Glu-409 provides a ligand contact to Mg(2+). Residue Phe-432 participates in L-phenylalanine binding.

Belongs to the class-II aminoacyl-tRNA synthetase family. Phe-tRNA synthetase alpha subunit type 2 subfamily. In terms of assembly, tetramer of two alpha and two beta subunits. Requires Mg(2+) as cofactor.

The protein resides in the cytoplasm. The enzyme catalyses tRNA(Phe) + L-phenylalanine + ATP = L-phenylalanyl-tRNA(Phe) + AMP + diphosphate + H(+). This chain is Phenylalanine--tRNA ligase alpha subunit, found in Methanocaldococcus jannaschii (strain ATCC 43067 / DSM 2661 / JAL-1 / JCM 10045 / NBRC 100440) (Methanococcus jannaschii).